Reading from the N-terminus, the 373-residue chain is Erythronate-4-phosphate dehydrogenase (373 aa).

Serine 45 and threonine 66 together coordinate substrate. NAD(+) is bound by residues aspartate 146 and threonine 175. Arginine 208 is a catalytic residue. Residue aspartate 232 participates in NAD(+) binding. Glutamate 237 is an active-site residue. Catalysis depends on histidine 254, which acts as the Proton donor. Residue glycine 257 coordinates NAD(+). Tyrosine 258 is a substrate binding site.

The protein belongs to the D-isomer specific 2-hydroxyacid dehydrogenase family. PdxB subfamily. As to quaternary structure, homodimer.

It localises to the cytoplasm. It carries out the reaction 4-phospho-D-erythronate + NAD(+) = (R)-3-hydroxy-2-oxo-4-phosphooxybutanoate + NADH + H(+). It participates in cofactor biosynthesis; pyridoxine 5'-phosphate biosynthesis; pyridoxine 5'-phosphate from D-erythrose 4-phosphate: step 2/5. Functionally, catalyzes the oxidation of erythronate-4-phosphate to 3-hydroxy-2-oxo-4-phosphonooxybutanoate. This is Erythronate-4-phosphate dehydrogenase from Serratia proteamaculans (strain 568).